The primary structure comprises 189 residues: UPF0301 protein PFL_5830 (189 aa).

It belongs to the UPF0301 (AlgH) family.

The protein is UPF0301 protein PFL_5830 of Pseudomonas fluorescens (strain ATCC BAA-477 / NRRL B-23932 / Pf-5).